The sequence spans 150 residues: D-aminoacyl-tRNA deacylase (150 aa).

The Gly-cisPro motif, important for rejection of L-amino acids signature appears at 138 to 139 (GP).

It belongs to the DTD family. In terms of assembly, homodimer.

It localises to the cytoplasm. The catalysed reaction is glycyl-tRNA(Ala) + H2O = tRNA(Ala) + glycine + H(+). It catalyses the reaction a D-aminoacyl-tRNA + H2O = a tRNA + a D-alpha-amino acid + H(+). Functionally, an aminoacyl-tRNA editing enzyme that deacylates mischarged D-aminoacyl-tRNAs. Also deacylates mischarged glycyl-tRNA(Ala), protecting cells against glycine mischarging by AlaRS. Acts via tRNA-based rather than protein-based catalysis; rejects L-amino acids rather than detecting D-amino acids in the active site. By recycling D-aminoacyl-tRNA to D-amino acids and free tRNA molecules, this enzyme counteracts the toxicity associated with the formation of D-aminoacyl-tRNA entities in vivo and helps enforce protein L-homochirality. In Akkermansia muciniphila (strain ATCC BAA-835 / DSM 22959 / JCM 33894 / BCRC 81048 / CCUG 64013 / CIP 107961 / Muc), this protein is D-aminoacyl-tRNA deacylase.